The following is a 517-amino-acid chain: MSILRSPYQCLKQCGNYLVAARGSSIDTFDIKNGSYLSTWKSPVPESMSRSKTTEEETQTKNEDQNSETATPEFILESSAPPAKRRKLSITKESGENTGVVQQSKKKTKNSSPKILEPSPITALTITRDLQHVIAVTGEDKTIRVLAWEDTVEKGLRQISDRTMPKRPCALAITDDCNTIISADKFGDVYSLPLIPSPLVPSATENASVQKQAPKMFQPSASALTVHSARNLKALEAQKKQSNKVSEKTGPDFEHKLLLGHVSMLTDILVATLSGRQYILTADRDEHIRISRGIPQAHIIENFCLGHIEYVSRLCIPPTRPEILISGGGDDDLYTWNWLNGSLLSKTNLKSQVEALDTEKQSAQEAESKKIAVTGVYHARDEVSNQDIIIATSEGVPAAFIYFLTASNQLTHTQTLALPGNALSCTFSNPDLSSPFSLIISINNIHEPSSITTLKDANSSVANPLQFFKYENEKFVSVQQDGFAPQDSEGILDDQQKNNLCGLLYNVGNLRKMEDEE.

Positions 40 to 117 are disordered; it reads WKSPVPESMS…TKNSSPKILE (78 aa). Over residues 52–64 the composition is skewed to basic and acidic residues; the sequence is KTTEEETQTKNED. WD repeat units follow at residues 116 to 158, 260 to 301, and 306 to 346; these read LEPS…GLRQ, GHVS…HIIE, and GHIE…LLSK.

This sequence belongs to the WD repeat TRM82 family. Forms a heterodimer with the catalytic subunit trm8.

It localises to the nucleus. It functions in the pathway tRNA modification; N(7)-methylguanine-tRNA biosynthesis. In terms of biological role, required for the formation of N(7)-methylguanine at position 46 (m7G46) in tRNA. In the complex, it is required to stabilize and induce conformational changes of the catalytic subunit. The protein is tRNA (guanine-N(7)-)-methyltransferase non-catalytic subunit trm82 (trm82) of Sclerotinia sclerotiorum (strain ATCC 18683 / 1980 / Ss-1) (White mold).